The chain runs to 579 residues: Salivary alpha-glucosidase (579 aa).

The first 18 residues, 1-18, serve as a signal peptide directing secretion; it reads MKIFVPLLSFLLAGLTTG. Ca(2+) contacts are provided by aspartate 37, aspartate 39, aspartate 41, isoleucine 43, aspartate 45, and asparagine 118. Residues asparagine 118 and asparagine 151 are each glycosylated (N-linked (GlcNAc...) asparagine). Ca(2+) is bound at residue aspartate 189. Residue aspartate 219 is the Nucleophile of the active site. Positions 223, 224, and 226 each coordinate Ca(2+). An N-linked (GlcNAc...) asparagine glycan is attached at asparagine 282. Residue glutamate 290 is the Proton donor of the active site. Residues asparagine 304, asparagine 325, and asparagine 401 are each glycosylated (N-linked (GlcNAc...) asparagine). Asparagine 325 serves as a coordination point for N-acetyl-beta-D-glucosamine.

This sequence belongs to the glycosyl hydrolase 13 family. In terms of tissue distribution, saliva (at protein level). Proximal lateral lobes of the salivary gland (at protein level).

The protein resides in the secreted. It catalyses the reaction Hydrolysis of terminal, non-reducing (1-&gt;4)-linked alpha-D-glucose residues with release of alpha-D-glucose.. Functionally, functions as a glucosidase that shows high activity toward sucrose, a major component of nectar. Assists the mosquito in its sugar-feeding capabilities. The chain is Salivary alpha-glucosidase from Aedes aegypti (Yellowfever mosquito).